A 399-amino-acid polypeptide reads, in one-letter code: Succinate--CoA ligase [ADP-forming] subunit beta (399 aa).

The ATP-grasp domain occupies 9 to 254 (KELLAKYGVG…ETEEDPAEIE (246 aa)). ATP-binding positions include Lys46, 53–55 (GRG), Val112, and Glu117. 2 residues coordinate Mg(2+): Asn209 and Asp223. Substrate is bound by residues Asn274 and 331-333 (GIM).

Belongs to the succinate/malate CoA ligase beta subunit family. In terms of assembly, heterotetramer of two alpha and two beta subunits. Mg(2+) serves as cofactor.

It carries out the reaction succinate + ATP + CoA = succinyl-CoA + ADP + phosphate. The catalysed reaction is GTP + succinate + CoA = succinyl-CoA + GDP + phosphate. It functions in the pathway carbohydrate metabolism; tricarboxylic acid cycle; succinate from succinyl-CoA (ligase route): step 1/1. Succinyl-CoA synthetase functions in the citric acid cycle (TCA), coupling the hydrolysis of succinyl-CoA to the synthesis of either ATP or GTP and thus represents the only step of substrate-level phosphorylation in the TCA. The beta subunit provides nucleotide specificity of the enzyme and binds the substrate succinate, while the binding sites for coenzyme A and phosphate are found in the alpha subunit. This Novosphingobium aromaticivorans (strain ATCC 700278 / DSM 12444 / CCUG 56034 / CIP 105152 / NBRC 16084 / F199) protein is Succinate--CoA ligase [ADP-forming] subunit beta.